We begin with the raw amino-acid sequence, 827 residues long: 6-phosphofructo-2-kinase 1 (827 aa).

Disordered regions lie at residues methionine 1–alanine 97 and threonine 149–isoleucine 175. Residues serine 31–arginine 41 are compositionally biased toward low complexity. The segment covering serine 42–lysine 59 has biased composition (basic and acidic residues). Over residues threonine 72–alanine 97 the composition is skewed to polar residues. Residue serine 92 is modified to Phosphoserine. Threonine 157 bears the Phosphothreonine mark. An ATP-binding site is contributed by glycine 190–serine 197. Residues aspartate 277 and cysteine 309 contribute to the active site. Position 343 (arginine 343) interacts with beta-D-fructose 6-phosphate. Residue serine 404 is the Phosphoserine intermediate of the active site. The active site involves glutamate 497. Histidine 565 acts as the Proton donor in catalysis. A phosphoserine mark is found at serine 644, serine 652, serine 659, and serine 667. Disordered stretches follow at residues alanine 649–asparagine 704 and histidine 799–valine 827. Over residues serine 671–glutamine 682 the composition is skewed to low complexity. Over residues proline 683–asparagine 704 the composition is skewed to polar residues.

It carries out the reaction beta-D-fructose 6-phosphate + ATP = beta-D-fructose 2,6-bisphosphate + ADP + H(+). Phosphorylation results in the activation of the kinase activity. Its function is as follows. Synthesis of fructose 2,6-bisphosphate. In Saccharomyces cerevisiae (strain ATCC 204508 / S288c) (Baker's yeast), this protein is 6-phosphofructo-2-kinase 1 (PFK26).